The following is a 56-amino-acid chain: Small ribosomal subunit protein uS14 (56 aa).

Residues C21, C24, C39, and C42 each contribute to the Zn(2+) site.

Belongs to the universal ribosomal protein uS14 family. Zinc-binding uS14 subfamily. As to quaternary structure, part of the 30S ribosomal subunit. It depends on Zn(2+) as a cofactor.

Binds 16S rRNA, required for the assembly of 30S particles. This is Small ribosomal subunit protein uS14 from Pyrococcus abyssi (strain GE5 / Orsay).